Here is a 169-residue protein sequence, read N- to C-terminus: 3-hydroxyacyl-[acyl-carrier-protein] dehydratase FabZ (169 aa).

Histidine 74 is a catalytic residue.

Belongs to the thioester dehydratase family. FabZ subfamily.

Its subcellular location is the cytoplasm. The catalysed reaction is a (3R)-hydroxyacyl-[ACP] = a (2E)-enoyl-[ACP] + H2O. Its function is as follows. Involved in unsaturated fatty acids biosynthesis. Catalyzes the dehydration of short chain beta-hydroxyacyl-ACPs and long chain saturated and unsaturated beta-hydroxyacyl-ACPs. This Gluconobacter oxydans (strain 621H) (Gluconobacter suboxydans) protein is 3-hydroxyacyl-[acyl-carrier-protein] dehydratase FabZ.